The following is a 569-amino-acid chain: Sialic acid-binding Ig-like lectin 5 (569 aa).

A signal peptide spans 1–16; it reads MRWAWLLPLLWAGCLA. Topologically, residues 17 to 439 are extracellular; the sequence is TDGYSLSVTG…KSETSRGTVL (423 aa). The region spanning 18–116 is the Ig-like V-type domain; that stretch reads DGYSLSVTGS…DTGTYFFRLD (99 aa). 4 disulfide bridges follow: Cys-35–Cys-163, Cys-40–Cys-96, Cys-157–Cys-206, and Cys-265–Cys-308. Asn-95 is a glycosylation site (N-linked (GlcNAc...) asparagine). N-acetylneuraminate-binding residues include Arg-114, Lys-120, and Ser-122. Ig-like C2-type domains lie at 139–224 and 229–324; these read PNIQ…QQLS and PQKM…VSLS. Residues Asn-151, Asn-200, and Asn-203 are each glycosylated (N-linked (GlcNAc...) asparagine). Residues Asn-369, Asn-372, and Asn-387 are each glycosylated (N-linked (GlcNAc...) asparagine). A helical transmembrane segment spans residues 440–460; that stretch reads GAIWGAGLMALLAVCLCLIFF. Residues 461–569 lie on the Cytoplasmic side of the membrane; the sequence is TVKVLRKKSA…VYTEIKIHKC (109 aa). The tract at residues 508 to 556 is disordered; that stretch reads HLNEPGSQTQKEQPPLATVPDTQKDEPELHYASLSFQGPMPPKPQNTEA. The short motif at 536–541 is the ITIM motif element; that stretch reads LHYASL. An SLAM-like motif motif is present at residues 559–564; it reads SVYTEI.

This sequence belongs to the immunoglobulin superfamily. SIGLEC (sialic acid binding Ig-like lectin) family. In terms of tissue distribution, predominantly expressed by immature monocytic/myeloid lineage cells in bone marrow. Also found at lower levels in mature neutrophils and monocytes.

The protein localises to the membrane. Its function is as follows. Putative adhesion molecule that mediates sialic-acid dependent binding to cells. Preferentially binds to alpha-2,3-linked sialic acid. The sialic acid recognition site may be masked by cis interactions with sialic acids on the same cell surface. The protein is Sialic acid-binding Ig-like lectin 5 (Siglec5) of Mus musculus (Mouse).